The chain runs to 73 residues: Small ribosomal subunit protein bS18c (73 aa).

Belongs to the bacterial ribosomal protein bS18 family. Part of the 30S ribosomal subunit.

Its subcellular location is the plastid. The protein localises to the chloroplast. This chain is Small ribosomal subunit protein bS18c, found in Nephroselmis olivacea (Green alga).